The following is a 243-amino-acid chain: Pyridoxine 5'-phosphate synthase (243 aa).

Asn-9 contacts 3-amino-2-oxopropyl phosphate. Residue 11–12 (DH) coordinates 1-deoxy-D-xylulose 5-phosphate. Arg-20 is a binding site for 3-amino-2-oxopropyl phosphate. The active-site Proton acceptor is the His-45. 2 residues coordinate 1-deoxy-D-xylulose 5-phosphate: Arg-47 and His-52. The Proton acceptor role is filled by Glu-72. Thr-102 contributes to the 1-deoxy-D-xylulose 5-phosphate binding site. His-193 functions as the Proton donor in the catalytic mechanism. 3-amino-2-oxopropyl phosphate is bound by residues Gly-194 and 215–216 (GH).

Belongs to the PNP synthase family. As to quaternary structure, homooctamer; tetramer of dimers.

The protein resides in the cytoplasm. The catalysed reaction is 3-amino-2-oxopropyl phosphate + 1-deoxy-D-xylulose 5-phosphate = pyridoxine 5'-phosphate + phosphate + 2 H2O + H(+). Its pathway is cofactor biosynthesis; pyridoxine 5'-phosphate biosynthesis; pyridoxine 5'-phosphate from D-erythrose 4-phosphate: step 5/5. Its function is as follows. Catalyzes the complicated ring closure reaction between the two acyclic compounds 1-deoxy-D-xylulose-5-phosphate (DXP) and 3-amino-2-oxopropyl phosphate (1-amino-acetone-3-phosphate or AAP) to form pyridoxine 5'-phosphate (PNP) and inorganic phosphate. The chain is Pyridoxine 5'-phosphate synthase from Shigella boydii serotype 4 (strain Sb227).